Consider the following 340-residue polypeptide: 7,8-didemethyl-8-hydroxy-5-deazariboflavin synthase (340 aa).

The region spanning 25–256 (ATYSPAYTIV…SDITIQIPPN (232 aa)) is the Radical SAM core domain. Residues Cys39, Cys43, and Cys46 each contribute to the [4Fe-4S] cluster site.

It belongs to the radical SAM superfamily. CofG family. As to quaternary structure, consists of two subunits, CofG and CofH. [4Fe-4S] cluster is required as a cofactor.

It catalyses the reaction 5-amino-5-(4-hydroxybenzyl)-6-(D-ribitylimino)-5,6-dihydrouracil + S-adenosyl-L-methionine = 7,8-didemethyl-8-hydroxy-5-deazariboflavin + 5'-deoxyadenosine + L-methionine + NH4(+) + H(+). It participates in cofactor biosynthesis; coenzyme F0 biosynthesis. Its function is as follows. Catalyzes the radical-mediated synthesis of 7,8-didemethyl-8-hydroxy-5-deazariboflavin from 5-amino-5-(4-hydroxybenzyl)-6-(D-ribitylimino)-5,6-dihydrouracil. The protein is 7,8-didemethyl-8-hydroxy-5-deazariboflavin synthase of Trichormus variabilis (strain ATCC 29413 / PCC 7937) (Anabaena variabilis).